Here is a 408-residue protein sequence, read N- to C-terminus: CinA-like protein (408 aa).

The protein belongs to the CinA family.

The protein is CinA-like protein of Anaeromyxobacter sp. (strain K).